The following is a 495-amino-acid chain: Membrane-bound lytic murein transglycosylase F (495 aa).

A signal peptide spans 1–30 (MSRIRHHRFIQSCLVISTLLITLTGCQVES). Positions 31-270 (EPKTKLEQIR…LLEEKYFGHV (240 aa)) are non-LT domain. An LT domain region spans residues 272–495 (SFDYVDTRAF…SVSQAIETKK (224 aa)). Glutamate 315 is an active-site residue.

It in the N-terminal section; belongs to the bacterial solute-binding protein 3 family. In the C-terminal section; belongs to the transglycosylase Slt family.

It localises to the cell outer membrane. The catalysed reaction is Exolytic cleavage of the (1-&gt;4)-beta-glycosidic linkage between N-acetylmuramic acid (MurNAc) and N-acetylglucosamine (GlcNAc) residues in peptidoglycan, from either the reducing or the non-reducing ends of the peptidoglycan chains, with concomitant formation of a 1,6-anhydrobond in the MurNAc residue.. Its function is as follows. Murein-degrading enzyme that degrades murein glycan strands and insoluble, high-molecular weight murein sacculi, with the concomitant formation of a 1,6-anhydromuramoyl product. Lytic transglycosylases (LTs) play an integral role in the metabolism of the peptidoglycan (PG) sacculus. Their lytic action creates space within the PG sacculus to allow for its expansion as well as for the insertion of various structures such as secretion systems and flagella. This is Membrane-bound lytic murein transglycosylase F from Aliivibrio fischeri (strain ATCC 700601 / ES114) (Vibrio fischeri).